The sequence spans 62 residues: Kininogen-1 (62 aa).

The N-terminal stretch at 1 to 22 (MDILKKSLFLVLFLGLVSFSIC) is a signal peptide. Residues 24 to 62 (EEKRDTEEEENDDEIEEESEEKKREAPERPPGFTPFRIY) form a disordered region. Acidic residues predominate over residues 30-42 (EEEENDDEIEEES). Pro-54 carries the post-translational modification 4-hydroxyproline; partial. At Tyr-62 the chain carries Sulfotyrosine.

The protein belongs to the frog skin active peptide (FSAP) family. Bradykinin-related peptide subfamily. In terms of tissue distribution, expressed by the skin glands.

It is found in the secreted. In terms of biological role, inhibits ACE with a Ki of 1.6 uM, and targets B2 bradykinin receptor (BDKRB2). Provokes contraction of smooth muscle preparation (ileum). In vivo, induces an early hyperalgesic effects in living rats after intraplantar injection. The sequence is that of Kininogen-1 from Phyllomedusa sauvagei (Sauvage's leaf frog).